Here is a 202-residue protein sequence, read N- to C-terminus: Na(+)-translocating NADH-quinone reductase subunit E (202 aa).

The next 6 helical transmembrane spans lie at 11–31 (AVFV…FIAI), 35–55 (VETA…TVPA), 81–101 (FLGL…LEML), 114–134 (GVFL…LFMV), 144–164 (TVYG…LAGI), and 180–200 (LGIT…FSGV).

This sequence belongs to the NqrDE/RnfAE family. As to quaternary structure, composed of six subunits; NqrA, NqrB, NqrC, NqrD, NqrE and NqrF.

The protein localises to the cell inner membrane. It catalyses the reaction a ubiquinone + n Na(+)(in) + NADH + H(+) = a ubiquinol + n Na(+)(out) + NAD(+). Its function is as follows. NQR complex catalyzes the reduction of ubiquinone-1 to ubiquinol by two successive reactions, coupled with the transport of Na(+) ions from the cytoplasm to the periplasm. NqrA to NqrE are probably involved in the second step, the conversion of ubisemiquinone to ubiquinol. In Pseudomonas aeruginosa (strain LESB58), this protein is Na(+)-translocating NADH-quinone reductase subunit E.